Here is a 187-residue protein sequence, read N- to C-terminus: Elongation factor P (187 aa).

This sequence belongs to the elongation factor P family.

It localises to the cytoplasm. It functions in the pathway protein biosynthesis; polypeptide chain elongation. In terms of biological role, involved in peptide bond synthesis. Stimulates efficient translation and peptide-bond synthesis on native or reconstituted 70S ribosomes in vitro. Probably functions indirectly by altering the affinity of the ribosome for aminoacyl-tRNA, thus increasing their reactivity as acceptors for peptidyl transferase. The polypeptide is Elongation factor P (Parvibaculum lavamentivorans (strain DS-1 / DSM 13023 / NCIMB 13966)).